Reading from the N-terminus, the 445-residue chain is UPF0210 protein Sez_0396 (445 aa).

This sequence belongs to the UPF0210 family. In terms of assembly, homodimer.

This chain is UPF0210 protein Sez_0396, found in Streptococcus equi subsp. zooepidemicus (strain MGCS10565).